The following is a 408-amino-acid chain: Putative transporter AmpG 2 (408 aa).

A run of 12 helical transmembrane segments spans residues 11–31, 49–69, 84–104, 110–130, 154–174, 177–197, 224–244, 261–281, 294–311, 315–337, 353–373, and 382–402; these read IFNI…YLLT, IGLF…GPLL, YCLV…TSFN, TPFV…DMLI, FRIG…IISW, VYRT…FYPL, WIVI…LSIM, IGYK…GGFL, VLIY…LYFL, IISL…SPFF, IALI…ISGY, and YFFI…LYLP.

This sequence belongs to the major facilitator superfamily.

It is found in the cell inner membrane. This is Putative transporter AmpG 2 (ampG2) from Rickettsia typhi (strain ATCC VR-144 / Wilmington).